A 531-amino-acid chain; its full sequence is Peptide chain release factor 3 (531 aa).

The 270-residue stretch at 13-282 (AKRRTFAIIS…TLIEHAPPPK (270 aa)) folds into the tr-type G domain. Residues 22-29 (SHPDAGKT), 90-94 (DTPGH), and 144-147 (NKLD) contribute to the GTP site.

It belongs to the TRAFAC class translation factor GTPase superfamily. Classic translation factor GTPase family. PrfC subfamily.

It is found in the cytoplasm. Its function is as follows. Increases the formation of ribosomal termination complexes and stimulates activities of RF-1 and RF-2. It binds guanine nucleotides and has strong preference for UGA stop codons. It may interact directly with the ribosome. The stimulation of RF-1 and RF-2 is significantly reduced by GTP and GDP, but not by GMP. In Psychrobacter sp. (strain PRwf-1), this protein is Peptide chain release factor 3.